The chain runs to 1460 residues: Cilia- and flagella-associated protein 43 (1460 aa).

9 WD repeats span residues 46–87 (EGRY…HLQC), 91–132 (VATV…RLVK), 184–221 (SKGHYFHSCVWGTEGLYCGAGRGQVVLLDELRTDMKNY), 303–342 (RRRSASDTVKLLVLGGLVVIVCLDGSLVTYDQDTNTAGHT), 428–468 (IFAC…DSAS), 529–569 (MRDH…MKLP), 589–628 (FGRGGITCLSVWNAAGGFVCGGNDSVVHLVPVGKSPIHYS), 911–951 (EIDP…VTEV), and 1129–1170 (NRRF…CRAV). Coiled-coil stretches lie at residues 1170–1214 (VVEA…AEEA) and 1399–1446 (LGEH…LREA).

It belongs to the CFAP43 family.

The protein localises to the cell projection. The protein resides in the cilium. Its subcellular location is the flagellum. It localises to the cytoplasm. It is found in the cytoskeleton. The protein localises to the flagellum axoneme. Its function is as follows. Flagellar protein involved in flagellum axoneme organization and function. The protein is Cilia- and flagella-associated protein 43 of Trypanosoma brucei brucei (strain 927/4 GUTat10.1).